The chain runs to 78 residues: uncharacterized protein (78 aa).

Helical transmembrane passes span 25–45 and 50–70; these read IITA…DEVV and KCAD…FVFV.

The protein localises to the membrane. This is an uncharacterized protein from Saccharomyces cerevisiae (strain ATCC 204508 / S288c) (Baker's yeast).